Here is a 216-residue protein sequence, read N- to C-terminus: MRKYLAEFLGTFMLVFLGTATVVIAKGDVLAIGLAFGLAITVSAYAFGGISGGHFNPAVTTAMLINRRIDAADAIGYIIAQIIGAIVASAAVKSFVSALGLSATLLGQTDFPKIGSGMAFFVEALVTFLFLMVILNVTSNDHGNADFAGLTIGVTLAFLIIVALNLTGGSLNPARSIGPAIFAGGSALSHLWVYILAPEVGAILAAFCARVMGSED.

2 consecutive transmembrane segments (helical) span residues Leu5–Ala25 and Leu30–Ile50. Residues Asn56–Ala58 carry the NPA 1 motif. 3 consecutive transmembrane segments (helical) span residues Ala72–Val92, Ile114–Ile134, and Phe147–Thr167. The NPA 2 motif lies at Asn172 to Ala174. Residues Leu191–Gly213 traverse the membrane as a helical segment.

It belongs to the MIP/aquaporin (TC 1.A.8) family.

It localises to the cell membrane. In terms of biological role, probable transporter that facilitates the transmembrane diffusion of an unknown substrate. Is not permeable to water, dihydroxyacetone, glycerol, urea, H(2)O(2) and D/L-lactic acid. This chain is Glycerol uptake facilitator protein-like 6, found in Lactiplantibacillus plantarum (strain ATCC BAA-793 / NCIMB 8826 / WCFS1) (Lactobacillus plantarum).